Consider the following 1434-residue polypeptide: Probable ATP-dependent RNA helicase spindle-E (1434 aa).

One can recognise a Helicase ATP-binding domain in the interval Ile126–Val295. Residue Gly139–Thr146 participates in ATP binding. The DEAH box signature appears at Asp241–His244. Residues Thr356–Lys527 enclose the Helicase C-terminal domain. In terms of domain architecture, Tudor spans Ala936–His999.

It belongs to the DEAD box helicase family. DEAH subfamily.

It localises to the cytoplasm. It catalyses the reaction ATP + H2O = ADP + phosphate + H(+). Probable ATP-binding RNA helicase which plays a central role during spermatogenesis and oogenesis by repressing transposable elements and preventing their mobilization, which is essential for the germline integrity. Acts via the piRNA metabolic process, which mediates the repression of transposable elements during meiosis by forming complexes composed of piRNAs and Piwi and govern the methylation and subsequent repression of transposons. Involved in the repression of LTR retrotransposon copia. Also involved in telomere regulation by repressing specialized telomeric retroelements HeT-A, TAHRE, and TART; Drosophila telomeres being maintained by transposition of specialized telomeric retroelements. Involved in telomeric trans-silencing, a repression mechanism by which a transposon or a transgene inserted in subtelomeric heterochromatin has the capacity to repress in trans in the female germline, a homologous transposon, or transgene located in euchromatin. Involved in the repression of testis-expressed Stellate genes by the homologous Su(Ste) repeats. Required for anteroposterior and dorsoventral axis formation during oogenesis. In Drosophila persimilis (Fruit fly), this protein is Probable ATP-dependent RNA helicase spindle-E (spn-E).